Here is a 41-residue protein sequence, read N- to C-terminus: Large ribosomal subunit protein bL36 (41 aa).

This sequence belongs to the bacterial ribosomal protein bL36 family.

The polypeptide is Large ribosomal subunit protein bL36 (Rhodopseudomonas palustris (strain TIE-1)).